The sequence spans 297 residues: Leucine-rich repeat-containing protein 25 (297 aa).

Residues 1–25 form the signal peptide; it reads MGSIRTRLLWLCLLMLLALLHKSGS. At 26–169 the chain is on the extracellular side; it reads QDLTCMVHPS…SCPPSWGPGT (144 aa). Residues asparagine 44 and asparagine 49 are each glycosylated (N-linked (GlcNAc...) asparagine). LRR repeat units follow at residues 66-89 and 90-113; these read HAQV…DKLE and KLQT…LRCD. N-linked (GlcNAc...) asparagine glycans are attached at residues asparagine 133 and asparagine 152. A helical transmembrane segment spans residues 170–190; it reads IGALVAGTISLAVAVSGSVLA. The Cytoplasmic segment spans residues 191–297; sequence WRLLRRRRRA…VYCNLESLGR (107 aa). Residues 202 to 244 form a disordered region; the sequence is EHSLSKAQMSPHDIPKPVTDFLPRYSSRRPGPKAPDSPPSRFT. Phosphoserine occurs at positions 211, 238, and 267. Position 289 is a phosphotyrosine (tyrosine 289).

In terms of assembly, interacts with RIGI. Interacts with SQSTM1. Interacts with p65/RELA; this interaction promotes the degradation of RELA through autophagy.

It localises to the membrane. The protein localises to the cytoplasm. Plays a role in the inhibition of RLR-mediated type I interferon signaling pathway by targeting RIGI for autophagic degradation. Interacts specifically with ISG15-associated RIGI to promote interaction between RIGI and the autophagic cargo receptor p62/SQSTM1 to mediate RIGI degradation via selective autophagy. Plays also a role in the inhibition of NF-kappa-B signaling pathway and inflammatory response by promoting the degradation of p65/RELA. The chain is Leucine-rich repeat-containing protein 25 (Lrrc25) from Mus musculus (Mouse).